The following is a 305-amino-acid chain: Beta-lactamase (305 aa).

Positions 1 to 34 form a signal peptide, tat-type signal; that stretch reads MGTTGARPSRRAVLTAAAGAAVAGIPLGGSTAFA. Ser-82 functions as the Acyl-ester intermediate in the catalytic mechanism. Substrate is bound at residue 250-252; that stretch reads KTG.

The protein belongs to the class-A beta-lactamase family. Post-translationally, predicted to be exported by the Tat system. The position of the signal peptide cleavage has not been experimentally proven.

It carries out the reaction a beta-lactam + H2O = a substituted beta-amino acid. This is Beta-lactamase from Streptomyces lavendulae.